The sequence spans 109 residues: Nucleoid-associated protein PC1_1077 (109 aa).

The protein belongs to the YbaB/EbfC family. As to quaternary structure, homodimer.

Its subcellular location is the cytoplasm. The protein resides in the nucleoid. In terms of biological role, binds to DNA and alters its conformation. May be involved in regulation of gene expression, nucleoid organization and DNA protection. The sequence is that of Nucleoid-associated protein PC1_1077 from Pectobacterium carotovorum subsp. carotovorum (strain PC1).